The sequence spans 201 residues: uncharacterized protein (201 aa).

Residues 1–22 (MAASKAAKSSEDRAGGGGGGGG) form a disordered region.

This is an uncharacterized protein from Tomato ringspot virus (isolate raspberry) (ToRSV).